A 334-amino-acid polypeptide reads, in one-letter code: GTPase Obg (334 aa).

The 159-residue stretch at 4–162 folds into the Obg domain; that stretch reads FDFIDEVKKY…GWIKLELKLL (159 aa). The OBG-type G domain occupies 163–330; the sequence is AEVGLVGFPN…FKDKIWKLLH (168 aa). GTP contacts are provided by residues 169–176, 194–198, 216–219, 284–287, and 311–313; these read GFPNAGKS, FTTLV, DMPG, SKLD, and SSV. 2 residues coordinate Mg(2+): S176 and T196.

This sequence belongs to the TRAFAC class OBG-HflX-like GTPase superfamily. OBG GTPase family. As to quaternary structure, monomer. Mg(2+) is required as a cofactor.

Its subcellular location is the cytoplasm. In terms of biological role, an essential GTPase which binds GTP, GDP and possibly (p)ppGpp with moderate affinity, with high nucleotide exchange rates and a fairly low GTP hydrolysis rate. Plays a role in control of the cell cycle, stress response, ribosome biogenesis and in those bacteria that undergo differentiation, in morphogenesis control. The chain is GTPase Obg from Amoebophilus asiaticus (strain 5a2).